A 627-amino-acid chain; its full sequence is Sodium- and chloride-dependent GABA transporter 3 (627 aa).

The disordered stretch occupies residues methionine 1–glutamate 36. Over methionine 1–glutamate 53 the chain is Cytoplasmic. The residue at position 21 (serine 21) is a Phosphoserine. Residues alanine 23–alanine 32 are compositionally biased toward gly residues. Helical transmembrane passes span phenylalanine 54–leucine 74, alanine 82–leucine 101, and glycine 126–leucine 146. The Extracellular portion of the chain corresponds to alanine 147–arginine 220. N-linked (GlcNAc...) asparagine glycosylation is found at asparagine 182, asparagine 185, and asparagine 193. 9 helical membrane-spanning segments follow: residues tryptophan 221 to tryptophan 239, valine 248 to isoleucine 265, isoleucine 301 to tyrosine 318, isoleucine 330 to leucine 351, methionine 384 to leucine 403, leucine 433 to threonine 451, glycine 468 to serine 488, tryptophan 509 to valine 528, and isoleucine 548 to isoleucine 566. Over lysine 567–phenylalanine 627 the chain is Cytoplasmic.

It belongs to the sodium:neurotransmitter symporter (SNF) (TC 2.A.22) family. SLC6A11 subfamily. Brain and retina. Expressed predominantly within neurons. Expressed in the hippocampus (at protein level).

It is found in the cell membrane. The enzyme catalyses 4-aminobutanoate(out) + chloride(out) + 2 Na(+)(out) = 4-aminobutanoate(in) + chloride(in) + 2 Na(+)(in). The catalysed reaction is taurine(out) + chloride(out) + 2 Na(+)(out) = taurine(in) + chloride(in) + 2 Na(+)(in). It catalyses the reaction beta-alanine(out) + chloride(out) + 2 Na(+)(out) = beta-alanine(in) + chloride(in) + 2 Na(+)(in). It carries out the reaction hypotaurine(out) + chloride(out) + 2 Na(+)(out) = hypotaurine(in) + chloride(in) + 2 Na(+)(in). Its activity is regulated as follows. GABA transport is inhibited by beta-alanine. Mediates sodium- and chloride-dependent transport of gamma-aminobutyric acid (GABA). Can also mediate transport of beta-alanine and to a lower extent that of taurine and hypotaurine. The polypeptide is Sodium- and chloride-dependent GABA transporter 3 (Slc6a11) (Rattus norvegicus (Rat)).